We begin with the raw amino-acid sequence, 199 residues long: Recombination protein RecR (199 aa).

Residues 57 to 72 form a C4-type zinc finger; sequence CSICGNITDKDPCYVC. Positions 80-176 constitute a Toprim domain; that stretch reads TIVCVVQDSR…RVTRIAHGLP (97 aa).

This sequence belongs to the RecR family.

Functionally, may play a role in DNA repair. It seems to be involved in an RecBC-independent recombinational process of DNA repair. It may act with RecF and RecO. This Exiguobacterium sibiricum (strain DSM 17290 / CCUG 55495 / CIP 109462 / JCM 13490 / 255-15) protein is Recombination protein RecR.